The chain runs to 157 residues: Ribosomal RNA large subunit methyltransferase H (157 aa).

S-adenosyl-L-methionine contacts are provided by residues Leu73, Gly105, and 124 to 129; that span reads LSRMTF.

The protein belongs to the RNA methyltransferase RlmH family. In terms of assembly, homodimer.

The protein resides in the cytoplasm. The enzyme catalyses pseudouridine(1915) in 23S rRNA + S-adenosyl-L-methionine = N(3)-methylpseudouridine(1915) in 23S rRNA + S-adenosyl-L-homocysteine + H(+). In terms of biological role, specifically methylates the pseudouridine at position 1915 (m3Psi1915) in 23S rRNA. The chain is Ribosomal RNA large subunit methyltransferase H from Porphyromonas gingivalis (strain ATCC 33277 / DSM 20709 / CIP 103683 / JCM 12257 / NCTC 11834 / 2561).